Here is a 965-residue protein sequence, read N- to C-terminus: Glycine dehydrogenase (decarboxylating) (965 aa).

Lysine 711 bears the N6-(pyridoxal phosphate)lysine mark.

It belongs to the GcvP family. In terms of assembly, the glycine cleavage system is composed of four proteins: P, T, L and H. Pyridoxal 5'-phosphate is required as a cofactor.

It carries out the reaction N(6)-[(R)-lipoyl]-L-lysyl-[glycine-cleavage complex H protein] + glycine + H(+) = N(6)-[(R)-S(8)-aminomethyldihydrolipoyl]-L-lysyl-[glycine-cleavage complex H protein] + CO2. The glycine cleavage system catalyzes the degradation of glycine. The P protein binds the alpha-amino group of glycine through its pyridoxal phosphate cofactor; CO(2) is released and the remaining methylamine moiety is then transferred to the lipoamide cofactor of the H protein. In Psychrobacter arcticus (strain DSM 17307 / VKM B-2377 / 273-4), this protein is Glycine dehydrogenase (decarboxylating).